The chain runs to 260 residues: Late transcription factor 1 (260 aa).

This sequence belongs to the chordopoxvirinae VLTF-1 family. In terms of assembly, interacts with the late transcription factors VLTF-2 and VLTF-3. Interacts with the late transcription elongation factor VLTF-4. Interacts with itself.

Functionally, associates with RNA polymerase to initiate transcription from late gene promoters. This Homo sapiens (Human) protein is Late transcription factor 1 (OPG093).